The chain runs to 87 residues: Large ribosomal subunit protein bL27 (87 aa).

This sequence belongs to the bacterial ribosomal protein bL27 family.

In Pseudarthrobacter chlorophenolicus (strain ATCC 700700 / DSM 12829 / CIP 107037 / JCM 12360 / KCTC 9906 / NCIMB 13794 / A6) (Arthrobacter chlorophenolicus), this protein is Large ribosomal subunit protein bL27.